The chain runs to 140 residues: Desampylase (140 aa).

One can recognise an MPN domain in the interval 13 to 133 (TLIIPQHYLR…WILSEKNKIS (121 aa)). Glu34 functions as the Proton donor/acceptor in the catalytic mechanism. Residues His88, His90, and Asp101 each coordinate Zn(2+). The JAMM motif motif lies at 88-101 (HSHIACPPIPSGKD).

Belongs to the peptidase M67B family. As to quaternary structure, exists in two major states: monomer and homodimer. Both conformational states are catalytically active. Zn(2+) is required as a cofactor. In terms of processing, the disulfide bridge probably stabilizes the PfJAMM1 homodimer at the optimal growth temperature of the hyperthermophile.

The enzyme catalyses an N(6)-[small archaeal modifier protein]-[protein]-L-lysine + H2O = a [protein]-L-lysine + a [small archaeal modifier protein].. Its activity is regulated as follows. Inhibited by EDTA in vitro. Functionally, metalloprotease that displays desampylase (DSAMP) activity, cleaving ubiquitin-like small archaeal modifier proteins (SAMP1, SAMP2 and SAMP3) from protein conjugates (isopeptide- and linear-linked). Thus, likely regulates sampylation and the pools of 'free' SAMP available for protein modification. In vitro, is also able to cleave non-physiological ubiquitin (Ub) substrates, such as 'Met1-', 'Lys48-', and 'Lys63'-linked Ub dimers (Ub2), and to remove Ub tags from diverse proteins. The sequence is that of Desampylase from Pyrococcus furiosus (strain ATCC 43587 / DSM 3638 / JCM 8422 / Vc1).